We begin with the raw amino-acid sequence, 195 residues long: Probable GTP-binding protein EngB (195 aa).

An EngB-type G domain is found at 24–195 (DIPEIALAGR…AAWDAILSKI (172 aa)). Residues 32–39 (GRSNVGKS), 59–63 (GKTQL), 77–80 (DVPG), 144–147 (TKAD), and 176–178 (FSS) contribute to the GTP site. Residues S39 and T61 each coordinate Mg(2+).

It belongs to the TRAFAC class TrmE-Era-EngA-EngB-Septin-like GTPase superfamily. EngB GTPase family. Mg(2+) serves as cofactor.

In terms of biological role, necessary for normal cell division and for the maintenance of normal septation. The polypeptide is Probable GTP-binding protein EngB (Streptococcus sanguinis (strain SK36)).